The sequence spans 104 residues: Large ribosomal subunit protein uL23 (104 aa).

This sequence belongs to the universal ribosomal protein uL23 family. As to quaternary structure, part of the 50S ribosomal subunit. Contacts protein L29, and trigger factor when it is bound to the ribosome.

One of the early assembly proteins it binds 23S rRNA. One of the proteins that surrounds the polypeptide exit tunnel on the outside of the ribosome. Forms the main docking site for trigger factor binding to the ribosome. This Polynucleobacter asymbioticus (strain DSM 18221 / CIP 109841 / QLW-P1DMWA-1) (Polynucleobacter necessarius subsp. asymbioticus) protein is Large ribosomal subunit protein uL23.